We begin with the raw amino-acid sequence, 213 residues long: Ubiquitin-conjugating enzyme E2 S (213 aa).

Residues 13–159 (QIIRQVAKEV…ARMMTEIHAK (147 aa)) enclose the UBC core domain. Catalysis depends on cysteine 97, which acts as the Glycyl thioester intermediate. A disordered region spans residues 157 to 213 (HAKPTTKTAPTKNEETNCPSTSGTQSTSEGPMAKKHAGDKNAAEKKKKEKKRALRRL). The segment covering 174-185 (CPSTSGTQSTSE) has biased composition (polar residues). Over residues 192–202 (HAGDKNAAEKK) the composition is skewed to basic and acidic residues. Over residues 203–213 (KKEKKRALRRL) the composition is skewed to basic residues.

Belongs to the ubiquitin-conjugating enzyme family.

It catalyses the reaction S-ubiquitinyl-[E1 ubiquitin-activating enzyme]-L-cysteine + [E2 ubiquitin-conjugating enzyme]-L-cysteine = [E1 ubiquitin-activating enzyme]-L-cysteine + S-ubiquitinyl-[E2 ubiquitin-conjugating enzyme]-L-cysteine.. It functions in the pathway protein modification; protein ubiquitination. Its function is as follows. Catalyzes the covalent attachment of ubiquitin to other proteins. Acts as an essential factor of the anaphase promoting complex/cyclosome (APC/C), a cell cycle-regulated ubiquitin ligase that controls progression through mitosis. Acts by specifically elongating polyubiquitin chains initiated by the E2 enzyme UBCH10 on APC/C substrates, enhancing the degradation of APC/C substrates by the proteasome and promoting mitotic exit. The chain is Ubiquitin-conjugating enzyme E2 S from Branchiostoma floridae (Florida lancelet).